The sequence spans 346 residues: tRNA N6-adenosine threonylcarbamoyltransferase (346 aa).

3 residues coordinate Fe cation: H109, H113, and Y135. Substrate contacts are provided by residues 135-139 (YVSGG), D167, G180, E184, and N263. A Fe cation-binding site is contributed by D291.

It belongs to the KAE1 / TsaD family. Monomer. Component of the KEOPS complex that consists of Kae1, Bud32, Cgi121 and Pcc1; the whole complex dimerizes. Requires Fe(2+) as cofactor.

Its subcellular location is the cytoplasm. It catalyses the reaction L-threonylcarbamoyladenylate + adenosine(37) in tRNA = N(6)-L-threonylcarbamoyladenosine(37) in tRNA + AMP + H(+). Required for the formation of a threonylcarbamoyl group on adenosine at position 37 (t(6)A37) in tRNAs that read codons beginning with adenine. Is a component of the KEOPS complex that is probably involved in the transfer of the threonylcarbamoyl moiety of threonylcarbamoyl-AMP (TC-AMP) to the N6 group of A37. Kae1 likely plays a direct catalytic role in this reaction, but requires other protein(s) of the complex to fulfill this activity. This chain is tRNA N6-adenosine threonylcarbamoyltransferase, found in Methanopyrus kandleri (strain AV19 / DSM 6324 / JCM 9639 / NBRC 100938).